Consider the following 101-residue polypeptide: Small ribosomal subunit protein uS14m (101 aa).

The protein belongs to the universal ribosomal protein uS14 family. Component of the mitochondrial ribosome small subunit (28S) which comprises a 12S rRNA and about 30 distinct proteins. Interacts with LIAT1.

It localises to the mitochondrion. This is Small ribosomal subunit protein uS14m (mrps14) from Dictyostelium discoideum (Social amoeba).